Here is a 243-residue protein sequence, read N- to C-terminus: Epoxyqueuosine reductase QueH (243 aa).

Residues 1-16 (MHRTKLEQKQPHFDAQ) are compositionally biased toward basic and acidic residues. Residues 1-30 (MHRTKLEQKQPHFDAQKRRKKECKNSNTPF) are disordered. [4Fe-4S] cluster is bound by residues cysteine 49, cysteine 50, cysteine 128, and cysteine 131. A disulfide bond links cysteine 211 and cysteine 213.

This sequence belongs to the QueH family.

It carries out the reaction epoxyqueuosine(34) in tRNA + AH2 = queuosine(34) in tRNA + A + H2O. It participates in tRNA modification; tRNA-queuosine biosynthesis. Its function is as follows. Catalyzes the conversion of epoxyqueuosine (oQ) to queuosine (Q), which is a hypermodified base found in the wobble positions of tRNA(Asp), tRNA(Asn), tRNA(His) and tRNA(Tyr). This Histophilus somni (strain 129Pt) (Haemophilus somnus) protein is Epoxyqueuosine reductase QueH.